The following is a 626-amino-acid chain: UvrABC system protein C (626 aa).

The GIY-YIG domain occupies 20-97; that stretch reads ECSGVYKMLD…IKKFQPKFNI (78 aa). The 36-residue stretch at 207–242 folds into the UVR domain; that stretch reads RELQENLSKKMQELSSQMRFEEAAEIRDRIKALSYV.

Belongs to the UvrC family. Interacts with UvrB in an incision complex.

It localises to the cytoplasm. In terms of biological role, the UvrABC repair system catalyzes the recognition and processing of DNA lesions. UvrC both incises the 5' and 3' sides of the lesion. The N-terminal half is responsible for the 3' incision and the C-terminal half is responsible for the 5' incision. The polypeptide is UvrABC system protein C (Rickettsia typhi (strain ATCC VR-144 / Wilmington)).